The chain runs to 450 residues: Endosomal transmembrane epsin interactor 1 (450 aa).

The signal sequence occupies residues 1-29 (MILLVNLFVLLSVVCVLLNLAGFILGCQG). Residues 30 to 85 (AQFVSSVPRCDLVDLGEGKICFCCEEFQPAKCTDKENALKLFPVQPCSAVHLLLKK) are Lumenal-facing. Residues 86-106 (VLFALCALNALTTTVCLVAAA) traverse the membrane as a helical segment. Topologically, residues 107–450 (LRYLQIFATR…LIGVIRETVL (344 aa)) are cytoplasmic. The mediates interaction with EPN1 stretch occupies residues 107-450 (LRYLQIFATR…LIGVIRETVL (344 aa)). Short sequence motifs (PPxY; mediates interaction with ITCH) lie at residues 148–151 (PPSY) and 194–197 (PPPY). A disordered region spans residues 235–284 (DGDIPNIPAEENASTSTPSSTLVRPIRSRRALPPLRTRSKSDPVLHPSEE). The span at 246–256 (NASTSTPSSTL) shows a compositional bias: polar residues. The segment covering 273-284 (SKSDPVLHPSEE) has biased composition (basic and acidic residues). Lys-274 is covalently cross-linked (Glycyl lysine isopeptide (Lys-Gly) (interchain with G-Cter in ubiquitin)). Ser-275 is subject to Phosphoserine. Residues Lys-329 and Lys-365 each participate in a glycyl lysine isopeptide (Lys-Gly) (interchain with G-Cter in ubiquitin) cross-link.

It belongs to the ENTREP family. Interacts with ITCH; enhances the ubiquitination of CXCR4 by ITCH and the subsequent endocytosis and desensitization of the receptor. Interacts with EPN1. Monoubiquitinated at Lys-274, Lys-329 and Lys-365 by ITCH. In terms of tissue distribution, prominently expressed in muscle.

It is found in the early endosome membrane. The protein resides in the late endosome membrane. The protein localises to the recycling endosome membrane. Its subcellular location is the cell membrane. Functionally, functions as an activator of the E3 ubiquitin protein ligase ITCH in the ubiquitination of the CXCL12-activated CXCR4 receptor. Thereby, triggers CXCR4 endocytosis and desensitization, negatively regulating the CXCL12/CXCR4 signaling pathway. This is Endosomal transmembrane epsin interactor 1 from Homo sapiens (Human).